The following is a 632-amino-acid chain: MAU2 chromatid cohesion factor homolog (632 aa).

TPR repeat units follow at residues 453–486 (GGFY…ANAE) and 493–526 (SCSL…ASKI).

Belongs to the SCC4/mau-2 family. In terms of assembly, interacts with Nipped-B to form the cohesin loading complex.

The protein resides in the nucleus. It localises to the nucleoplasm. Required for association of the cohesin complex with chromatin during interphase. Plays a role in sister chromatid cohesion and normal progression through prometaphase. This is MAU2 chromatid cohesion factor homolog from Drosophila sechellia (Fruit fly).